Reading from the N-terminus, the 325-residue chain is Glycerol-3-phosphate dehydrogenase [NAD(P)+] (325 aa).

3 residues coordinate NADPH: Trp15, Arg35, and Lys107. Sn-glycerol 3-phosphate-binding residues include Lys107, Gly135, and Ser137. Ala139 is a binding site for NADPH. Sn-glycerol 3-phosphate-binding residues include Lys190, Asp243, Ser253, Arg254, and Asn255. Lys190 functions as the Proton acceptor in the catalytic mechanism. Arg254 contributes to the NADPH binding site. Leu272 and Glu274 together coordinate NADPH.

This sequence belongs to the NAD-dependent glycerol-3-phosphate dehydrogenase family.

The protein resides in the cytoplasm. The catalysed reaction is sn-glycerol 3-phosphate + NAD(+) = dihydroxyacetone phosphate + NADH + H(+). The enzyme catalyses sn-glycerol 3-phosphate + NADP(+) = dihydroxyacetone phosphate + NADPH + H(+). Its pathway is membrane lipid metabolism; glycerophospholipid metabolism. Catalyzes the reduction of the glycolytic intermediate dihydroxyacetone phosphate (DHAP) to sn-glycerol 3-phosphate (G3P), the key precursor for phospholipid synthesis. In Afipia carboxidovorans (strain ATCC 49405 / DSM 1227 / KCTC 32145 / OM5) (Oligotropha carboxidovorans), this protein is Glycerol-3-phosphate dehydrogenase [NAD(P)+].